The sequence spans 880 residues: Alanine--tRNA ligase (880 aa).

Residues His-567, His-571, Cys-669, and His-673 each coordinate Zn(2+).

It belongs to the class-II aminoacyl-tRNA synthetase family. Zn(2+) is required as a cofactor.

The protein resides in the cytoplasm. The catalysed reaction is tRNA(Ala) + L-alanine + ATP = L-alanyl-tRNA(Ala) + AMP + diphosphate. In terms of biological role, catalyzes the attachment of alanine to tRNA(Ala) in a two-step reaction: alanine is first activated by ATP to form Ala-AMP and then transferred to the acceptor end of tRNA(Ala). Also edits incorrectly charged Ser-tRNA(Ala) and Gly-tRNA(Ala) via its editing domain. In Syntrophomonas wolfei subsp. wolfei (strain DSM 2245B / Goettingen), this protein is Alanine--tRNA ligase.